The chain runs to 441 residues: Glutamate-1-semialdehyde 2,1-aminomutase (441 aa).

K276 carries the N6-(pyridoxal phosphate)lysine modification.

It belongs to the class-III pyridoxal-phosphate-dependent aminotransferase family. HemL subfamily. As to quaternary structure, homodimer. Pyridoxal 5'-phosphate is required as a cofactor.

It is found in the cytoplasm. It carries out the reaction (S)-4-amino-5-oxopentanoate = 5-aminolevulinate. It functions in the pathway porphyrin-containing compound metabolism; protoporphyrin-IX biosynthesis; 5-aminolevulinate from L-glutamyl-tRNA(Glu): step 2/2. The polypeptide is Glutamate-1-semialdehyde 2,1-aminomutase (Rhodococcus jostii (strain RHA1)).